Here is a 225-residue protein sequence, read N- to C-terminus: Riboflavin kinase (225 aa).

The interval 1–89 (MPDIKYLKKL…SRIFSPDLDI (89 aa)) is unknown. A riboflavin kinase region spans residues 90–225 (LELEGKVLKG…LKKQGTENQK (136 aa)). 99 to 104 (GLGEGQ) is a binding site for CDP. Residues Thr-128 and Asn-130 each contribute to the Mg(2+) site. FMN contacts are provided by Thr-185 and Glu-193. Residue 198–201 (IKLR) coordinates CDP.

This sequence belongs to the archaeal riboflavin kinase family. The cofactor is Mg(2+).

It carries out the reaction riboflavin + CTP = CDP + FMN + H(+). The protein operates within cofactor biosynthesis; FMN biosynthesis; FMN from riboflavin (CTP route): step 1/1. Its function is as follows. Catalyzes the CTP-dependent phosphorylation of riboflavin (vitamin B2) to form flavin mononucleotide (FMN). This Methanosarcina barkeri (strain Fusaro / DSM 804) protein is Riboflavin kinase (ribK).